The following is a 698-amino-acid chain: Capon-like protein (698 aa).

One can recognise a PID domain in the interval F25–S194. Residues E191 to H240 are disordered. Positions D201–L217 are enriched in basic and acidic residues. Coiled coils occupy residues R265–L327, N379–N484, and L554–A583. The span at S396–A423 shows a compositional bias: low complexity. Positions S396–A460 are disordered. Residues Y436 to N447 are compositionally biased toward polar residues. Residues Q448–Q458 are compositionally biased toward low complexity. Positions G588–K698 are disordered. The span at S590 to S640 shows a compositional bias: low complexity. Polar residues-rich tracts occupy residues L662–S672 and N679–K698.

As to expression, expressed at higher level in wing imaginal disk.

In terms of biological role, putative adapter protein. This Drosophila melanogaster (Fruit fly) protein is Capon-like protein.